The chain runs to 264 residues: Virulence plasmid protein pGP3-D (264 aa).

In Chlamydia muridarum (strain MoPn / Nigg), this protein is Virulence plasmid protein pGP3-D.